We begin with the raw amino-acid sequence, 282 residues long: Phosphatidylserine decarboxylase proenzyme (282 aa).

Active-site charge relay system; for autoendoproteolytic cleavage activity residues include Asp85, His142, and Ser244. The active-site Schiff-base intermediate with substrate; via pyruvic acid; for decarboxylase activity is the Ser244. A Pyruvic acid (Ser); by autocatalysis modification is found at Ser244.

Belongs to the phosphatidylserine decarboxylase family. PSD-B subfamily. Prokaryotic type I sub-subfamily. Heterodimer of a large membrane-associated beta subunit and a small pyruvoyl-containing alpha subunit. Requires pyruvate as cofactor. In terms of processing, is synthesized initially as an inactive proenzyme. Formation of the active enzyme involves a self-maturation process in which the active site pyruvoyl group is generated from an internal serine residue via an autocatalytic post-translational modification. Two non-identical subunits are generated from the proenzyme in this reaction, and the pyruvate is formed at the N-terminus of the alpha chain, which is derived from the carboxyl end of the proenzyme. The autoendoproteolytic cleavage occurs by a canonical serine protease mechanism, in which the side chain hydroxyl group of the serine supplies its oxygen atom to form the C-terminus of the beta chain, while the remainder of the serine residue undergoes an oxidative deamination to produce ammonia and the pyruvoyl prosthetic group on the alpha chain. During this reaction, the Ser that is part of the protease active site of the proenzyme becomes the pyruvoyl prosthetic group, which constitutes an essential element of the active site of the mature decarboxylase.

It is found in the cell membrane. It catalyses the reaction a 1,2-diacyl-sn-glycero-3-phospho-L-serine + H(+) = a 1,2-diacyl-sn-glycero-3-phosphoethanolamine + CO2. It functions in the pathway phospholipid metabolism; phosphatidylethanolamine biosynthesis; phosphatidylethanolamine from CDP-diacylglycerol: step 2/2. In terms of biological role, catalyzes the formation of phosphatidylethanolamine (PtdEtn) from phosphatidylserine (PtdSer). The polypeptide is Phosphatidylserine decarboxylase proenzyme (Coxiella burnetii (strain CbuG_Q212) (Coxiella burnetii (strain Q212))).